Reading from the N-terminus, the 417-residue chain is WD repeat and FYVE domain-containing protein 2 (417 aa).

4 WD repeats span residues 29–68 (GHVARINDVILLSKDEGVWTASDDRSVRLYLKRDNDQFWP), 119–157 (CHAGPISGLGFALSSELIFSCSRDKSIVWHCSENSNKVG), 202–241 (AHTNSITSLTWDGNKKVLYSGSSDHLIIMWDIGGGKGEAY), and 245–284 (GHNGKVTTLCAAPAAKRLFSADEHGKLMCWDMDVRRVETP). The FYVE-type zinc-finger motif lies at 286–357 (WKTSDCCQKC…ICNDCAGRMK (72 aa)). Zn(2+)-binding residues include cysteine 292, cysteine 295, cysteine 319, cysteine 322, cysteine 327, cysteine 330, cysteine 349, and cysteine 352. Residues 373-412 (EIRTGITAMHLQETLGLLVTSGQNRVVMIWDVRSVCSAPS) form a WD 5 repeat.

In terms of biological role, plays a role in coelomocyte endocytosis. This is WD repeat and FYVE domain-containing protein 2 from Caenorhabditis briggsae.